A 240-amino-acid polypeptide reads, in one-letter code: HTH-type transcriptional regulator Mce2R (240 aa).

One can recognise an HTH gntR-type domain in the interval 9 to 77 (RSVPEEVFEQ…QGDVTTVRDF (69 aa)). A DNA-binding region (H-T-H motif) is located at residues 37–56 (ERRLAELLGVSRPAVREALK).

In terms of biological role, negatively regulates the expression of its operon as well as expression of end (endonuclease 4). In Mycobacterium tuberculosis (strain CDC 1551 / Oshkosh), this protein is HTH-type transcriptional regulator Mce2R (mce2R).